Here is a 370-residue protein sequence, read N- to C-terminus: Cyclic dehypoxanthine futalosine synthase (370 aa).

Residues 50–295 enclose the Radical SAM core domain; that stretch reads TTFVIGRNVN…QSSWVTMGPE (246 aa). [4Fe-4S] cluster contacts are provided by C64, C68, and C71.

The protein belongs to the radical SAM superfamily. MqnC family. [4Fe-4S] cluster is required as a cofactor.

It carries out the reaction dehypoxanthine futalosine + S-adenosyl-L-methionine = cyclic dehypoxanthinylfutalosinate + 5'-deoxyadenosine + L-methionine + H(+). It functions in the pathway quinol/quinone metabolism; menaquinone biosynthesis. Radical SAM enzyme that catalyzes the cyclization of dehypoxanthine futalosine (DHFL) into cyclic dehypoxanthine futalosine (CDHFL), a step in the biosynthesis of menaquinone (MK, vitamin K2). The polypeptide is Cyclic dehypoxanthine futalosine synthase (Halalkalibacterium halodurans (strain ATCC BAA-125 / DSM 18197 / FERM 7344 / JCM 9153 / C-125) (Bacillus halodurans)).